The following is a 466-amino-acid chain: ATP synthase subunit beta (466 aa).

Glycine 148–threonine 155 is a binding site for ATP.

This sequence belongs to the ATPase alpha/beta chains family. In terms of assembly, F-type ATPases have 2 components, CF(1) - the catalytic core - and CF(0) - the membrane proton channel. CF(1) has five subunits: alpha(3), beta(3), gamma(1), delta(1), epsilon(1). CF(0) has three main subunits: a(1), b(2) and c(9-12). The alpha and beta chains form an alternating ring which encloses part of the gamma chain. CF(1) is attached to CF(0) by a central stalk formed by the gamma and epsilon chains, while a peripheral stalk is formed by the delta and b chains.

The protein resides in the cell inner membrane. It catalyses the reaction ATP + H2O + 4 H(+)(in) = ADP + phosphate + 5 H(+)(out). Its function is as follows. Produces ATP from ADP in the presence of a proton gradient across the membrane. The catalytic sites are hosted primarily by the beta subunits. In Xylella fastidiosa (strain 9a5c), this protein is ATP synthase subunit beta.